The following is an 874-amino-acid chain: Endothelial PAS domain-containing protein 1 (874 aa).

A disordered region spans residues 1–23; sequence MTADKEKKRSSSELRKEKSRDAA. A bHLH domain is found at 14 to 67; it reads LRKEKSRDAARCRRSKETEVFYELAHELPLPHSVSSHLDKASIMRLAISFLRTH. The segment at 26-53 is DNA-binding; it reads RRSKETEVFYELAHELPLPHSVSSHLDK. In terms of domain architecture, PAS 1 spans 84-154; it reads DQQMDNLYLK…ENLTLKNGSG (71 aa). Residues 171 to 192 are required for heterodimer formation with ARNT; the sequence is RMKCTVTNRGRTVNLKSATWKV. The PAS 2 domain occupies 230–300; it reads QHPSHMDIPL…KSHQNLCTKG (71 aa). The 44-residue stretch at 304–347 folds into the PAC domain; the sequence is SGQYRMLAKHGGYVWLETQGTVIYNPRNLQPQCIMCVNYVLSEI. P405 is subject to 4-hydroxyproline. The interval 438-489 is disordered; it reads WVSGLRSHSAQSESGSLPAFTVPQADTPGNTTPSASSSSSCSTPSSPEDYYS. The span at 443–452 shows a compositional bias: polar residues; the sequence is RSHSAQSESG. Positions 464–484 are enriched in low complexity; sequence TPGNTTPSASSSSSCSTPSSP. The interval 495 to 541 is NTAD; it reads LKIEVIEKLFAMDTEPRDPGSTQTDFSELDLETLAPYIPMDGEDFQL. P530 is subject to 4-hydroxyproline. Residues 777–803 form a disordered region; sequence LGQPLRHLPPPQPPSTRSSGENAKTGF. The CTAD stretch occupies residues 834-874; that stretch reads SFEPYLLPELTRYDCEVNVPVPGSSTLLQGRDLLRALDQAT. The residue at position 844 (T844) is a Phosphothreonine. The residue at position 851 (N851) is a (3S)-3-hydroxyasparagine.

As to quaternary structure, interacts with HIF3A isoform 2. Efficient DNA binding requires dimerization with another bHLH protein. Heterodimerizes with ARNT; heterodimer binds to core DNA sequence 5'-TACGTG-3' within the hypoxia response element (HRE) of target gene promoters. Interacts with CREBBP. Interacts with EGLN1. Interacts with VHL. In normoxia, is probably hydroxylated on Pro-405 and Pro-530 by EGLN1/PHD1, EGLN2/PHD2 and/or EGLN3/PHD3. The hydroxylated prolines promote interaction with VHL, initiating rapid ubiquitination and subsequent proteasomal degradation. Under hypoxia, proline hydroxylation is impaired and ubiquitination is attenuated, resulting in stabilization. In terms of processing, in normoxia, is hydroxylated on Asn-851 by HIF1AN thus probably abrogating interaction with CREBBP and EP300 and preventing transcriptional activation. Post-translationally, phosphorylated on multiple sites in the CTAD. The iron and 2-oxoglutarate dependent 3-hydroxylation of asparagine is (S) stereospecific within HIF CTAD domains. Expressed in most tissues, with highest levels in lung, followed by heart, kidney, brain and liver. Predominantly expressed in endothelial cells. Also found in smooth muscle cells of the uterus, neurons, and brown adipose tissue. High expression in embryonic choroid plexus and kidney glomeruli.

It is found in the nucleus. The protein resides in the nucleus speckle. Transcription factor involved in the induction of oxygen regulated genes. Heterodimerizes with ARNT; heterodimer binds to core DNA sequence 5'-TACGTG-3' within the hypoxia response element (HRE) of target gene promoters. Regulates the vascular endothelial growth factor (VEGF) expression and seems to be implicated in the development of blood vessels and the tubular system of lung. May also play a role in the formation of the endothelium that gives rise to the blood brain barrier. Potent activator of the Tie-2 tyrosine kinase expression. Activation requires recruitment of transcriptional coactivators such as CREBBP and probably EP300. Interaction with redox regulatory protein APEX seems to activate CTAD. In Mus musculus (Mouse), this protein is Endothelial PAS domain-containing protein 1 (Epas1).